We begin with the raw amino-acid sequence, 308 residues long: Palmitoyltransferase ZDHHC7 (308 aa).

Over 1 to 50 the chain is Cytoplasmic; that stretch reads MQPSGHRLRDIEHHPLLTDNDNYDSASSSSSETDMADRVWFIRDGCGMVC. The helical transmembrane segment at 51–71 threads the bilayer; the sequence is AVMTWLLVVYADFVVTFVMLL. Residues 72–75 are Lumenal-facing; it reads PSKD. The chain crosses the membrane as a helical span at residues 76-96; it reads FWYSVVNGVLFNCLAVLALSS. Residues 97-173 lie on the Cytoplasmic side of the membrane; sequence HLRTMLTDPG…NNCVGEKNQR (77 aa). A DHHC domain is found at 130 to 180; it reads YKCPKCCCIKPERAHHCSICKRCIRKMDHHCPWVNNCVGEKNQRFFVLFTM. C160 functions as the S-palmitoyl cysteine intermediate in the catalytic mechanism. The helical transmembrane segment at 174-194 threads the bilayer; that stretch reads FFVLFTMYIALSSVHALILCG. At 195–217 the chain is on the lumenal side; the sequence is LQFISCVRGQWTECSDFSPPITV. Residues 218–238 traverse the membrane as a helical segment; it reads ILLVFLCLEGLLFFTFTAVMF. At 239–308 the chain is on the cytoplasmic side; the sequence is GTQIHSICND…TRKGGPEFSV (70 aa).

This sequence belongs to the DHHC palmitoyltransferase family. As to quaternary structure, homooligomers. Heterooligomers with ZDHHC3. Autopalmitoylated. As to expression, ubiquitously expressed, with highest levels in liver, kidney and brain. Expressed in all brain regions.

The protein resides in the golgi apparatus membrane. The enzyme catalyses L-cysteinyl-[protein] + hexadecanoyl-CoA = S-hexadecanoyl-L-cysteinyl-[protein] + CoA. It catalyses the reaction L-cysteinyl-[protein] + tetradecanoyl-CoA = S-tetradecanoyl-L-cysteinyl-[protein] + CoA. The catalysed reaction is L-cysteinyl-[protein] + octadecanoyl-CoA = S-octadecanoyl-L-cysteinyl-[protein] + CoA. Functionally, golgi-localized palmitoyltransferase that catalyzes the addition of palmitate onto various protein substrates and therefore functions in several unrelated biological processes. Has no stringent fatty acid selectivity and in addition to palmitate can also transfer onto target proteins myristate from tetradecanoyl-CoA and stearate from octadecanoyl-CoA. Palmitoylates sex steroid hormone receptors, including ESR1, PGR and AR, thereby regulating their targeting to the plasma membrane and their function in rapid intracellular signaling upon binding of sex hormones. Palmitoylates GNAQ, a heterotrimeric G protein, regulating its dynamic localization at the plasma membrane and is thereby involved in GNAQ-dependent G protein-coupled receptor signaling pathways. Also functions in ligand-induced cell death by regulating the FAS signaling pathway through the palmitoylation and stabilization of the receptor at the plasma membrane. In epithelial cells, palmitoylates SCRIB and regulates its localization to the plasma membrane, regulating indirectly cell polarity and differentiation. Also palmitoylates JAM3 and promotes its expression at tight junctions and regulates its function in cell migration. Palmitoylates the glucose transporter GLUT4/SLC2A4 and controls the insulin-dependent translocation of GLUT4 to the plasma membrane. In brain, could also palmitoylate SNAP25 and DLG4/PSD95. Could also palmitoylate DNAJC5 and regulate its localization to the Golgi membrane. Could also palmitoylate NCDN. May play a role in follicle stimulation hormone (FSH) activation of testicular Sertoli cells. Activates pyroptosis by catalyzing palmitoylation of gasdermin-D (GSDMD). The sequence is that of Palmitoyltransferase ZDHHC7 from Mus musculus (Mouse).